The chain runs to 603 residues: Serine palmitoyltransferase 2 (603 aa).

Residues 90–107 (YYYVVATYLTYLVLIIIG) traverse the membrane as a helical segment. Position 398 is an N6-(pyridoxal phosphate)lysine (Lys398).

This sequence belongs to the class-II pyridoxal-phosphate-dependent aminotransferase family. As to quaternary structure, lcb1 and lcb2 encode essential subunits of the enzyme and form a heterodimer. It depends on pyridoxal 5'-phosphate as a cofactor.

The protein resides in the cytoplasm. It is found in the endoplasmic reticulum. The protein localises to the membrane. It carries out the reaction L-serine + hexadecanoyl-CoA + H(+) = 3-oxosphinganine + CO2 + CoA. It functions in the pathway lipid metabolism; sphingolipid metabolism. In terms of biological role, catalytic subunit of serine palmitoyltransferase (SPT), which catalyzes the committed step in the synthesis of sphingolipids, the condensation of serine with palmitoyl CoA to form the long chain base 3-ketosphinganine. This Schizosaccharomyces pombe (strain 972 / ATCC 24843) (Fission yeast) protein is Serine palmitoyltransferase 2 (lcb2).